The following is a 192-amino-acid chain: Beta-glucosidase (192 aa).

The protein belongs to the glycosyl hydrolase 3 family.

The enzyme catalyses Hydrolysis of terminal, non-reducing beta-D-glucosyl residues with release of beta-D-glucose.. It functions in the pathway glycan metabolism; cellulose degradation. This chain is Beta-glucosidase, found in Schizophyllum commune (Split gill fungus).